Here is a 457-residue protein sequence, read N- to C-terminus: Guanine nucleotide-binding protein subunit alpha homolog (457 aa).

In terms of domain architecture, G-alpha spans 131–457 (RQVKLLLLGA…QRNLNALMLQ (327 aa)). The tract at residues 134–147 (KLLLLGAGESGKST) is G1 motif. GTP-binding positions include 139–146 (GAGESGKS), 274–280 (LHCRKAT), 299–303 (DVGGQ), 369–372 (NKTD), and Ala-429. The Mg(2+) site is built by Ser-146 and Thr-280. The segment at 272-280 (DILHCRKAT) is G2 motif. A G3 motif region spans residues 295 to 304 (FVFVDVGGQR). Residues 365 to 372 (ILFLNKTD) are G4 motif. Positions 427–432 (TTAIDT) are G5 motif.

This sequence belongs to the G-alpha family. G(12) subfamily. In terms of assembly, g proteins are composed of 3 units; alpha, beta and gamma. The alpha chain contains the guanine nucleotide binding site. In ovary, expressed in nurse cells and oocyte. In early embryos, distributed uniformly. At the extended germband stage, accumulates in the mesoderm.

The protein localises to the cytoplasm. Its function is as follows. May play a role in a signal transduction pathway used during gastrulation. Required specifically for the ventral furrow and posterior midgut invaginations, where it is necessary for coordinating cell shape changes. In terms of biological role, guanine nucleotide-binding proteins (G proteins) are involved as modulators or transducers in various transmembrane signaling systems. The chain is Guanine nucleotide-binding protein subunit alpha homolog (cta) from Drosophila melanogaster (Fruit fly).